A 125-amino-acid chain; its full sequence is Large ribosomal subunit protein uL18 (125 aa).

Glycine 2 is modified (N-acetylglycine). N6-acetyllysine occurs at positions 5 and 48.

This sequence belongs to the universal ribosomal protein uL18 family. As to quaternary structure, component of the large ribosomal subunit (LSU). Part of the 5S RNP complex, which is a LSU subcomplex composed of the 5S RNA, RPL5 and RPL11. Component of a hexameric 5S RNP precursor complex, composed of 5S RNA, RRS1, RPF2/BXDC1, RPL5, RPL11 and HEATR3; this complex acts as a precursor for ribosome assembly. Interacts with NVL in an ATP-dependent manner. Interacts with RRP1B. Interacts with IPO5, IPO7 and KPNB1; these interactions may be involved in RPL5 nuclear import for the assembly of ribosomal subunits. Interacts with RRP1B.

It is found in the cytoplasm. Its subcellular location is the nucleus. The protein localises to the nucleolus. Component of the ribosome, a large ribonucleoprotein complex responsible for the synthesis of proteins in the cell. The small ribosomal subunit (SSU) binds messenger RNAs (mRNAs) and translates the encoded message by selecting cognate aminoacyl-transfer RNA (tRNA) molecules. The large subunit (LSU) contains the ribosomal catalytic site termed the peptidyl transferase center (PTC), which catalyzes the formation of peptide bonds, thereby polymerizing the amino acids delivered by tRNAs into a polypeptide chain. The nascent polypeptides leave the ribosome through a tunnel in the LSU and interact with protein factors that function in enzymatic processing, targeting, and the membrane insertion of nascent chains at the exit of the ribosomal tunnel. As part of the 5S RNP/5S ribonucleoprotein particle it is an essential component of the LSU, required for its formation and the maturation of rRNAs. It also couples ribosome biogenesis to p53/TP53 activation. As part of the 5S RNP it accumulates in the nucleoplasm and inhibits MDM2, when ribosome biogenesis is perturbed, mediating the stabilization and the activation of TP53. The chain is Large ribosomal subunit protein uL18 (RPL5) from Sus scrofa (Pig).